Consider the following 100-residue polypeptide: NADH-quinone oxidoreductase subunit K (100 aa).

3 helical membrane-spanning segments follow: residues 4–24 (LQHG…GLVI), 28–48 (LLFM…AFVV), and 60–80 (VMYI…LALL).

It belongs to the complex I subunit 4L family. As to quaternary structure, NDH-1 is composed of 13 different subunits. Subunits NuoA, H, J, K, L, M, N constitute the membrane sector of the complex.

It is found in the cell inner membrane. It carries out the reaction a quinone + NADH + 5 H(+)(in) = a quinol + NAD(+) + 4 H(+)(out). In terms of biological role, NDH-1 shuttles electrons from NADH, via FMN and iron-sulfur (Fe-S) centers, to quinones in the respiratory chain. The immediate electron acceptor for the enzyme in this species is believed to be ubiquinone. Couples the redox reaction to proton translocation (for every two electrons transferred, four hydrogen ions are translocated across the cytoplasmic membrane), and thus conserves the redox energy in a proton gradient. The protein is NADH-quinone oxidoreductase subunit K of Musicola paradisiaca (strain Ech703) (Dickeya paradisiaca).